Reading from the N-terminus, the 311-residue chain is NEDD4 family-interacting protein 2 (311 aa).

The segment at 1–133 (RRSASDAELS…PPYSSITVEA (133 aa)) is disordered. Over 1–206 (RRSASDAELS…VEQLRVGNDG (206 aa)) the chain is Cytoplasmic. Positions 7-22 (AELSAGAEGATGSEAA) are enriched in low complexity. Residues 26 to 37 (DLGGRTRGGGRG) are compositionally biased toward gly residues. Residues 38-47 (SAAAAATTST) show a composition bias toward low complexity. A compositionally biased stretch (basic and acidic residues) spans 48-75 (REAEGAERRGDTPARKPDPEAGRMDHHQ). The segment covering 92–101 (ESSAVEQPST) has biased composition (polar residues). A compositionally biased stretch (low complexity) spans 102–120 (SSLAAPTVEAAASAPALDP). The tract at residues 123-126 (PPPY) is interaction with NEDD4. Residues 123 to 126 (PPPY) carry the PPxY motif 1 motif. Residues Tyr-126, Tyr-142, Tyr-146, and Tyr-152 each carry the phosphotyrosine; by SRC modification. Short sequence motifs (PPxY motif) lie at residues 149–152 (PPPY) and 159–161 (PTY). The chain crosses the membrane as a helical span at residues 207–227 (IFMLAFFMAFIFNWLGFCLSF). The Extracellular portion of the chain corresponds to 228–232 (CITNT). The chain crosses the membrane as a helical span at residues 233-253 (IAGRYGAICGFGLSLIKWILI). At 254 to 262 (VRFSDYFTG) the chain is on the cytoplasmic side. The helical transmembrane segment at 263–283 (YFNGQYWLWWIFLVLGLLLFF) threads the bilayer. At 284-311 (RGFVNYLKVRNMSESMAAAHRTRYFFLL) the chain is on the extracellular side.

As to quaternary structure, forms heterodimers with NDFIP1. Interacts with HECT domain-containing E3 ubiquitin-protein ligases, including NEDD4. Interacts with NEDD4L. When phosphorylated at Tyr-142, interacts with SRC and LYN SH2 domain. May thus act as a scaffold that recruits SRC to NDFIP1, enhancing NDFIP1 phosphorylation. Interacts with SLC11A2/DMT1. May interact with phosphorylated EGFR. Interacts with KCNH2. Post-translationally, ubiquitinated by NEDD4 and NEDD4L; which does not affect turnover. Also ubiquitinated by ITCH. Undergoes transient tyrosine-phosphorylation following EGF stimulation, most probably catalyzed by SRC. Phosphorylation on Tyr-126, Tyr-146 and Tyr-152 are dependent on the phosphorylation on Tyr-142. Also phosphorylated by LYN and FYN. In terms of tissue distribution, ubiquitously expressed, with highest levels in brain, liver, kidney and testis.

It is found in the endosome membrane. Its subcellular location is the golgi apparatus membrane. It localises to the endosome. The protein localises to the multivesicular body membrane. Functionally, activates HECT domain-containing E3 ubiquitin-protein ligases, including ITCH, NEDD4, NEDD4L, SMURF2, WWP1 and WWP2, and consequently modulates the stability of their targets. As a result, may control many cellular processes. Recruits ITCH, NEDD4 and SMURF2 to endosomal membranes. Negatively regulates KCNH2 potassium channel activity by decreasing its cell-surface expression and interfering with channel maturation through recruitment of NEDD4L to the Golgi apparatus and multivesicular body where it mediates KCNH2 degradation. May modulate EGFR signaling. Together with NDFIP1, limits the cytokine signaling and expansion of effector Th2 T-cells by promoting degradation of JAK1, probably by ITCH- and NEDD4L-mediated ubiquitination. This Mus musculus (Mouse) protein is NEDD4 family-interacting protein 2 (Ndfip2).